A 159-amino-acid chain; its full sequence is 2-C-methyl-D-erythritol 2,4-cyclodiphosphate synthase (159 aa).

A divalent metal cation contacts are provided by D8 and H10. 4-CDP-2-C-methyl-D-erythritol 2-phosphate-binding positions include 8-10 and 34-35; these read DVH and HS. Position 42 (H42) interacts with a divalent metal cation. 4-CDP-2-C-methyl-D-erythritol 2-phosphate is bound by residues 56 to 58, 61 to 65, 100 to 106, 132 to 135, F139, and R142; these read DIG, FPDTD, AQAPKML, and TTTE.

This sequence belongs to the IspF family. In terms of assembly, homotrimer. A divalent metal cation is required as a cofactor.

The enzyme catalyses 4-CDP-2-C-methyl-D-erythritol 2-phosphate = 2-C-methyl-D-erythritol 2,4-cyclic diphosphate + CMP. Its pathway is isoprenoid biosynthesis; isopentenyl diphosphate biosynthesis via DXP pathway; isopentenyl diphosphate from 1-deoxy-D-xylulose 5-phosphate: step 4/6. In terms of biological role, involved in the biosynthesis of isopentenyl diphosphate (IPP) and dimethylallyl diphosphate (DMAPP), two major building blocks of isoprenoid compounds. Catalyzes the conversion of 4-diphosphocytidyl-2-C-methyl-D-erythritol 2-phosphate (CDP-ME2P) to 2-C-methyl-D-erythritol 2,4-cyclodiphosphate (ME-CPP) with a corresponding release of cytidine 5-monophosphate (CMP). This is 2-C-methyl-D-erythritol 2,4-cyclodiphosphate synthase from Salmonella typhi.